We begin with the raw amino-acid sequence, 562 residues long: Extracellular matrix protein 1 (562 aa).

A signal peptide spans 1-19 (MGTIRSSALILACLALASA). Disordered regions lie at residues 46-87 (GYAA…SSPE) and 119-171 (QKEQ…WNPA). Residues 129–154 (IEQKEIDPPVQHQEEIVQSRQKEEKP) show a composition bias toward basic and acidic residues. 2 consecutive repeat copies span residues 172–301 (RHCQ…RPDY) and 305–427 (PCPI…YPNY). The interval 172–427 (RHCQQGRRGI…FAHLAPYPNY (256 aa)) is 2 X approximate repeats. Residues Asn-376, Asn-466, and Asn-538 are each glycosylated (N-linked (GlcNAc...) asparagine). The disordered stretch occupies residues 539 to 562 (ATGLGQQGPTGGTNVGPAPGSKEE). The segment covering 543–552 (GQQGPTGGTN) has biased composition (gly residues). Residue Ser-559 is modified to Phosphoserine.

As to quaternary structure, interacts (via C-terminus) with HSPG2 (via C-terminus). Interacts with EFEMP1/FBLN3 and LAMB3. Interacts with MMP9.

The protein resides in the secreted. Its subcellular location is the extracellular space. The protein localises to the extracellular matrix. Involved in endochondral bone formation as negative regulator of bone mineralization. Stimulates the proliferation of endothelial cells and promotes angiogenesis. Inhibits MMP9 proteolytic activity. The protein is Extracellular matrix protein 1 (Ecm1) of Rattus norvegicus (Rat).